The chain runs to 112 residues: Putative pterin-4-alpha-carbinolamine dehydratase (112 aa).

This sequence belongs to the pterin-4-alpha-carbinolamine dehydratase family.

It catalyses the reaction (4aS,6R)-4a-hydroxy-L-erythro-5,6,7,8-tetrahydrobiopterin = (6R)-L-erythro-6,7-dihydrobiopterin + H2O. The protein is Putative pterin-4-alpha-carbinolamine dehydratase of Vibrio campbellii (strain ATCC BAA-1116).